Consider the following 417-residue polypeptide: NADH-quinone oxidoreductase subunit D (417 aa).

This sequence belongs to the complex I 49 kDa subunit family. As to quaternary structure, NDH-1 is composed of 14 different subunits. Subunits NuoB, C, D, E, F, and G constitute the peripheral sector of the complex.

It localises to the cell inner membrane. The catalysed reaction is a quinone + NADH + 5 H(+)(in) = a quinol + NAD(+) + 4 H(+)(out). Its function is as follows. NDH-1 shuttles electrons from NADH, via FMN and iron-sulfur (Fe-S) centers, to quinones in the respiratory chain. The immediate electron acceptor for the enzyme in this species is believed to be ubiquinone. Couples the redox reaction to proton translocation (for every two electrons transferred, four hydrogen ions are translocated across the cytoplasmic membrane), and thus conserves the redox energy in a proton gradient. The chain is NADH-quinone oxidoreductase subunit D from Burkholderia thailandensis (strain ATCC 700388 / DSM 13276 / CCUG 48851 / CIP 106301 / E264).